The primary structure comprises 136 residues: Large ribosomal subunit protein uL16 (136 aa).

Positions 1–17 are enriched in basic residues; that stretch reads MLQPKRTKFRKRHKGRN. The tract at residues 1–21 is disordered; that stretch reads MLQPKRTKFRKRHKGRNRGLA.

This sequence belongs to the universal ribosomal protein uL16 family. As to quaternary structure, part of the 50S ribosomal subunit.

Functionally, binds 23S rRNA and is also seen to make contacts with the A and possibly P site tRNAs. This Buchnera aphidicola subsp. Acyrthosiphon kondoi (Acyrthosiphon kondoi symbiotic bacterium) protein is Large ribosomal subunit protein uL16.